Reading from the N-terminus, the 422-residue chain is Zinc finger and BTB domain-containing protein 42 (422 aa).

In terms of domain architecture, BTB spans 24-92 (CDCTVLVGDA…MYEGRLDLRS (69 aa)). Disordered stretches follow at residues 121 to 141 (KDRSLDPGNPAPGAEPAQPPC), 166 to 188 (AALPPRASGPPPCQVPEESDQAL), and 207 to 256 (LQTP…AAKG). Over residues 243 to 252 (HSPPKPPPVP) the composition is skewed to pro residues. 4 C2H2-type zinc fingers span residues 294–316 (CICPLCSKLFPSSHVLQLHLSAH), 334–356 (PTCPLCGKTFSCTYTLKRHERTH), 362–384 (YTCVQCGKSFQYSHNLSRHTVVH), and 390–413 (HACRWCERRFTQSGDLYRHVRKFH).

The protein belongs to the krueppel C2H2-type zinc-finger protein family. ZBTB18 subfamily. Expressed in skeletal muscle (at protein level).

It is found in the cytoplasm. The protein resides in the nucleus. The protein localises to the nucleoplasm. In terms of biological role, transcriptional repressor. Specifically binds DNA and probably acts by recruiting chromatin remodeling multiprotein complexes. This chain is Zinc finger and BTB domain-containing protein 42 (ZBTB42), found in Homo sapiens (Human).